Reading from the N-terminus, the 303-residue chain is Methionyl-tRNA formyltransferase (303 aa).

Residue 109 to 112 coordinates (6S)-5,6,7,8-tetrahydrofolate; the sequence is SLLP.

It belongs to the Fmt family.

The catalysed reaction is L-methionyl-tRNA(fMet) + (6R)-10-formyltetrahydrofolate = N-formyl-L-methionyl-tRNA(fMet) + (6S)-5,6,7,8-tetrahydrofolate + H(+). Functionally, attaches a formyl group to the free amino group of methionyl-tRNA(fMet). The formyl group appears to play a dual role in the initiator identity of N-formylmethionyl-tRNA by promoting its recognition by IF2 and preventing the misappropriation of this tRNA by the elongation apparatus. This Helicobacter pylori (strain ATCC 700392 / 26695) (Campylobacter pylori) protein is Methionyl-tRNA formyltransferase.